Reading from the N-terminus, the 156-residue chain is Cyanate hydratase (156 aa).

Catalysis depends on residues arginine 96, glutamate 99, and serine 122.

Belongs to the cyanase family.

The enzyme catalyses cyanate + hydrogencarbonate + 3 H(+) = NH4(+) + 2 CO2. In terms of biological role, catalyzes the reaction of cyanate with bicarbonate to produce ammonia and carbon dioxide. The sequence is that of Cyanate hydratase from Escherichia coli O9:H4 (strain HS).